A 92-amino-acid chain; its full sequence is MARVTVEDCLDHVDNRFELVLVASKRARQLARQGMEPTVEWDNDKPTVVALREIAVGHVTKEILKQREQDYQTSSLDLALSTNSLNLEGFSF.

The protein belongs to the RNA polymerase subunit omega family. In terms of assembly, the RNAP catalytic core consists of 2 alpha, 1 beta, 1 beta' and 1 omega subunit. When a sigma factor is associated with the core the holoenzyme is formed, which can initiate transcription.

The enzyme catalyses RNA(n) + a ribonucleoside 5'-triphosphate = RNA(n+1) + diphosphate. Functionally, promotes RNA polymerase assembly. Latches the N- and C-terminal regions of the beta' subunit thereby facilitating its interaction with the beta and alpha subunits. This Acinetobacter baumannii (strain AB307-0294) protein is DNA-directed RNA polymerase subunit omega.